Here is a 423-residue protein sequence, read N- to C-terminus: COUP transcription factor 1 (423 aa).

Residues 1–81 form a disordered region; the sequence is MAMVVSSWRD…QGPPGSGQSQ (81 aa). A compositionally biased stretch (low complexity) spans 39–67; it reads EQQQQAGSGAPHTPQTPGQPGAPATPGTA. Positions 83-158 form a DNA-binding region, nuclear receptor; the sequence is HIECVVCGDK…VGMRREAVQR (76 aa). 2 NR C4-type zinc fingers span residues 86 to 106 and 122 to 146; these read CVVC…CEGC and CRAN…LKKC. An NR LBD domain is found at 184-410; sequence YLSGYISLLL…TLIRDMLLSG (227 aa).

It belongs to the nuclear hormone receptor family. NR2 subfamily. Binds DNA as dimer; homodimer and probable heterodimer with NR2F6. Interacts with GTF2B; this interaction is direct. Interacts with COPS2.

Its subcellular location is the nucleus. Coup (chicken ovalbumin upstream promoter) transcription factor binds to the ovalbumin promoter and, in conjunction with another protein (S300-II) stimulates initiation of transcription. Binds to both direct repeats and palindromes of the 5'-AGGTCA-3' motif. Represses transcriptional activity of LHCG. In Homo sapiens (Human), this protein is COUP transcription factor 1 (NR2F1).